The following is a 382-amino-acid chain: Succinate--CoA ligase [ADP-forming] subunit beta (382 aa).

The ATP-grasp domain occupies 9-240 (KELFAKYGVK…PRDITEFEAY (232 aa)). ATP is bound by residues K45, 52–54 (GRG), L94, and E99. Mg(2+) contacts are provided by N193 and D207. Residues N260 and 317–319 (GIT) contribute to the substrate site.

It belongs to the succinate/malate CoA ligase beta subunit family. As to quaternary structure, heterotetramer of two alpha and two beta subunits. The cofactor is Mg(2+).

The catalysed reaction is succinate + ATP + CoA = succinyl-CoA + ADP + phosphate. It catalyses the reaction GTP + succinate + CoA = succinyl-CoA + GDP + phosphate. It functions in the pathway carbohydrate metabolism; tricarboxylic acid cycle; succinate from succinyl-CoA (ligase route): step 1/1. Functionally, succinyl-CoA synthetase functions in the citric acid cycle (TCA), coupling the hydrolysis of succinyl-CoA to the synthesis of either ATP or GTP and thus represents the only step of substrate-level phosphorylation in the TCA. The beta subunit provides nucleotide specificity of the enzyme and binds the substrate succinate, while the binding sites for coenzyme A and phosphate are found in the alpha subunit. The sequence is that of Succinate--CoA ligase [ADP-forming] subunit beta from Pyrobaculum calidifontis (strain DSM 21063 / JCM 11548 / VA1).